We begin with the raw amino-acid sequence, 344 residues long: DNA fragmentation factor subunit beta (344 aa).

Residues 7 to 83 (QPKCVKLRAL…LLTAGETWHG (77 aa)) form the CIDE-N domain.

As to quaternary structure, heterodimer of DFFA and DFFB. Interacts with H1-1.

The protein resides in the cytoplasm. Its subcellular location is the nucleus. Its activity is regulated as follows. Inhibited by DFFA (DFF45). Functionally, nuclease that induces DNA fragmentation and chromatin condensation during apoptosis. Degrades naked DNA and induces apoptotic morphology. This chain is DNA fragmentation factor subunit beta (Dffb), found in Mus musculus (Mouse).